The primary structure comprises 308 residues: Protein translocase subunit SecF (308 aa).

The next 6 membrane-spanning stretches (helical) occupy residues 28 to 48 (SIILSLISFIWIGIYKFNFGI), 140 to 160 (IEAGAMAMLFSFLAIMVYIWV), 164 to 184 (WYFGLGILIALVHDVILALGF), 194 to 214 (LSTIAAVLTIIGYSVNDSVVI), 246 to 266 (ILTVITTLLANLALILFGGEA), and 272 to 292 (VLVFFGIIAGTYSSIFISAPI).

It belongs to the SecD/SecF family. SecF subfamily. Forms a complex with SecD. Part of the essential Sec protein translocation apparatus which comprises SecA, SecYEG and auxiliary proteins SecDF-YajC and YidC.

Its subcellular location is the cell inner membrane. Its function is as follows. Part of the Sec protein translocase complex. Interacts with the SecYEG preprotein conducting channel. SecDF uses the proton motive force (PMF) to complete protein translocation after the ATP-dependent function of SecA. The protein is Protein translocase subunit SecF of Rickettsia felis (strain ATCC VR-1525 / URRWXCal2) (Rickettsia azadi).